A 336-amino-acid polypeptide reads, in one-letter code: MATERLVAGNLHNEDQELELSLRPRCLAEYIGQEHVKETLGIFIQAARERGEALDHVLLYGPPGLGKTTLAGIIANELGVQLRVTSGPALERAGDLAAILTNLQPRDVLFIDEIHRLPRQVEEILYPAMEDFVLDIILGKGPGARSIRLDLPPFTLVGATTRAGLLSSPLRDRFGINSRLEFYQVAELEEIIRRAATILQVAIEPEGAREIARRARGTPRVANRLLKRVRDYAEIRAGGVITREVAREALELLQVDAAGLDSSDRRLLLTLIRKFNGGPVGLETLAAAISEEPDTIEDVYEPFLLQMGYLQRTPRGRVATPGAYAHLGIKPEDRLF.

The interval methionine 1–tyrosine 183 is large ATPase domain (RuvB-L). Residues leucine 22, arginine 23, glycine 64, lysine 67, threonine 68, threonine 69, glutamate 130–phenylalanine 132, arginine 173, tyrosine 183, and arginine 220 each bind ATP. A Mg(2+)-binding site is contributed by threonine 68. The segment at glutamine 184 to glutamine 254 is small ATPAse domain (RuvB-S). Residues alanine 257 to phenylalanine 336 are head domain (RuvB-H). DNA contacts are provided by arginine 312 and arginine 317.

Belongs to the RuvB family. Homohexamer. Forms an RuvA(8)-RuvB(12)-Holliday junction (HJ) complex. HJ DNA is sandwiched between 2 RuvA tetramers; dsDNA enters through RuvA and exits via RuvB. An RuvB hexamer assembles on each DNA strand where it exits the tetramer. Each RuvB hexamer is contacted by two RuvA subunits (via domain III) on 2 adjacent RuvB subunits; this complex drives branch migration. In the full resolvosome a probable DNA-RuvA(4)-RuvB(12)-RuvC(2) complex forms which resolves the HJ.

It localises to the cytoplasm. The enzyme catalyses ATP + H2O = ADP + phosphate + H(+). Its function is as follows. The RuvA-RuvB-RuvC complex processes Holliday junction (HJ) DNA during genetic recombination and DNA repair, while the RuvA-RuvB complex plays an important role in the rescue of blocked DNA replication forks via replication fork reversal (RFR). RuvA specifically binds to HJ cruciform DNA, conferring on it an open structure. The RuvB hexamer acts as an ATP-dependent pump, pulling dsDNA into and through the RuvAB complex. RuvB forms 2 homohexamers on either side of HJ DNA bound by 1 or 2 RuvA tetramers; 4 subunits per hexamer contact DNA at a time. Coordinated motions by a converter formed by DNA-disengaged RuvB subunits stimulates ATP hydrolysis and nucleotide exchange. Immobilization of the converter enables RuvB to convert the ATP-contained energy into a lever motion, pulling 2 nucleotides of DNA out of the RuvA tetramer per ATP hydrolyzed, thus driving DNA branch migration. The RuvB motors rotate together with the DNA substrate, which together with the progressing nucleotide cycle form the mechanistic basis for DNA recombination by continuous HJ branch migration. Branch migration allows RuvC to scan DNA until it finds its consensus sequence, where it cleaves and resolves cruciform DNA. The sequence is that of Holliday junction branch migration complex subunit RuvB from Moorella thermoacetica (strain ATCC 39073 / JCM 9320).